The primary structure comprises 297 residues: N-acetylmuramic acid 6-phosphate etherase (297 aa).

An SIS domain is found at 55 to 218 (AAAALKSGGR…STGAMVKFGK (164 aa)). E83 acts as the Proton donor in catalysis. E114 is a catalytic residue.

Belongs to the GCKR-like family. MurNAc-6-P etherase subfamily. Homodimer.

It catalyses the reaction N-acetyl-D-muramate 6-phosphate + H2O = N-acetyl-D-glucosamine 6-phosphate + (R)-lactate. It functions in the pathway amino-sugar metabolism; 1,6-anhydro-N-acetylmuramate degradation. The protein operates within amino-sugar metabolism; N-acetylmuramate degradation. It participates in cell wall biogenesis; peptidoglycan recycling. Functionally, specifically catalyzes the cleavage of the D-lactyl ether substituent of MurNAc 6-phosphate, producing GlcNAc 6-phosphate and D-lactate. Together with AnmK, is also required for the utilization of anhydro-N-acetylmuramic acid (anhMurNAc) either imported from the medium or derived from its own cell wall murein, and thus plays a role in cell wall recycling. In Salmonella agona (strain SL483), this protein is N-acetylmuramic acid 6-phosphate etherase.